Consider the following 443-residue polypeptide: GTPase Der (443 aa).

EngA-type G domains lie at 3-167 (PVIA…PEEK) and 176-349 (IKIA…QSIQ). GTP-binding positions include 9–16 (GRPNVGKS), 56–60 (DTGGL), 119–122 (NKAD), 182–189 (GRPNVGKS), 229–233 (DTAGI), and 294–297 (NKWD). The KH-like domain maps to 350–434 (QELTTGQLTR…PVHIKLKTDP (85 aa)).

It belongs to the TRAFAC class TrmE-Era-EngA-EngB-Septin-like GTPase superfamily. EngA (Der) GTPase family. In terms of assembly, associates with the 50S ribosomal subunit.

In terms of biological role, GTPase that plays an essential role in the late steps of ribosome biogenesis. The chain is GTPase Der from Coxiella burnetii (strain CbuG_Q212) (Coxiella burnetii (strain Q212)).